The primary structure comprises 105 residues: MYRMPMRFWLTAVVMVVVGALLLDTASASYIENTCRGVMGNRDIYKKVVRVCEDCTNIFRLPGLDGMCRDRCFNNEWFLVCLKAANRDDELDKFKVWISILNPGL.

The signal sequence occupies residues 1-28 (MYRMPMRFWLTAVVMVVVGALLLDTASA). Disulfide bonds link Cys-35-Cys-72, Cys-52-Cys-68, and Cys-55-Cys-81.

Belongs to the arthropod CHH/MIH/GIH/VIH hormone family. As to expression, expressed in the postmolt, intermolt, and premolt stages of the shrimp eyestalks and the brain.

It is found in the secreted. In terms of biological role, inhibits Y-organs where molting hormone (ecdysteroid) is secreted. A molting cycle is initiated when MIH secretion diminishes or stops. This is Probable molt-inhibiting hormone from Metapenaeus ensis (Greasyback shrimp).